The primary structure comprises 414 residues: Eukaryotic initiation factor 4A-III-B (414 aa).

Positions 41–69 match the Q motif motif; sequence PTFDTMGLREDLLRGIYAYGFEKPSAIQQ. Residues Lys63, Gln68, 85–92, and 88–93 contribute to the ATP site; these read SQSGTGKT and GTGKTA. In terms of domain architecture, Helicase ATP-binding spans 72-242; that stretch reads IKQIIKGRDV…NKFMTDPIRI (171 aa). Positions 190-193 match the DEAD box motif; the sequence is DEAD. A Helicase C-terminal domain is found at 253–414; sequence GIKQFFVAVE…EMPMNVADLI (162 aa). Residues Asp345 and 370-374 each bind ATP; that span reads RSGRY.

It belongs to the DEAD box helicase family. In terms of assembly, identified in the spliceosome C complex. Part of the mRNA splicing-dependent exon junction complex (EJC) complex; the core complex contains casc3, eif4a3, magoh and rbm8a.

It is found in the nucleus. It localises to the nucleus speckle. The protein localises to the cytoplasm. The catalysed reaction is ATP + H2O = ADP + phosphate + H(+). ATP-dependent RNA helicase. Involved in pre-mRNA splicing as component of the spliceosome. Core component of the splicing-dependent multiprotein exon junction complex (EJC) deposited at splice junctions on mRNAs. The EJC is a dynamic structure consisting of core proteins and several peripheral nuclear and cytoplasmic associated factors that join the complex only transiently either during EJC assembly or during subsequent mRNA metabolism. The EJC marks the position of the exon-exon junction in the mature mRNA for the gene expression machinery and the core components remain bound to spliced mRNAs throughout all stages of mRNA metabolism thereby influencing downstream processes including nuclear mRNA export, subcellular mRNA localization, translation efficiency and nonsense-mediated mRNA decay (NMD). Binds spliced mRNA in sequence-independent manner, 20-24 nucleotides upstream of mRNA exon-exon junctions. Involved in craniofacial development. When overexpressed, induces epidermis in dissociated cells that would otherwise adopt a neural fate, a process that requires an active BMP signaling pathway. The sequence is that of Eukaryotic initiation factor 4A-III-B (eif4a3-b) from Xenopus laevis (African clawed frog).